The chain runs to 142 residues: Transcription antitermination protein NusB (142 aa).

It belongs to the NusB family.

Involved in transcription antitermination. Required for transcription of ribosomal RNA (rRNA) genes. Binds specifically to the boxA antiterminator sequence of the ribosomal RNA (rrn) operons. The chain is Transcription antitermination protein NusB from Borreliella burgdorferi (strain ATCC 35210 / DSM 4680 / CIP 102532 / B31) (Borrelia burgdorferi).